The sequence spans 207 residues: Guanylate kinase (207 aa).

The region spanning G3–T181 is the Guanylate kinase-like domain. A10–T17 lines the ATP pocket.

The protein belongs to the guanylate kinase family.

The protein resides in the cytoplasm. The catalysed reaction is GMP + ATP = GDP + ADP. Functionally, essential for recycling GMP and indirectly, cGMP. The chain is Guanylate kinase from Acinetobacter baylyi (strain ATCC 33305 / BD413 / ADP1).